The sequence spans 870 residues: MLNIAQRIFGSTNTRLVKSLYKIVNQINAIEHEFQILSDESLKNKTIEFKEQLNNGKTLDDILVPAFAVVREASKRILNMRHFDVQLIGGIVLHKGMISEMKTGEGKTLVATLAAYLNALEGKGVHVVTVNDYLAKRDADWMGELYNSLGITVGCILSDTNDLDRKKAYNCDIVYSTNNNLGFDYLRDNMKFSRNEMVQRGFNYAIVDEVDLILIDEARTPLIISGQVDQDIKMYNKIDKLIYELSEEDYELEEKHRNIFLTECGITKIENLLIQHKLISSNTSLYDIDNMIIMHYITQALRAHKIFSLDKDYIIKDGNIIIIDEFTGRMMDGRRYSDGLHQAIEAKEKLNVNNENQTLASITFQNYFRMYKKLSGMTGTAETESEELLGIYNLQVVQIPTNTPVQRIDLNDDIYCTEEEKFDAIIKFISECHKKLQPVLVGTISIEKSEILSKLLTKNKLKHSVLNARYHEQEAYIIAQAGIPGTITIATNMAGRGTDIQLGGNLKMLAKTTLANILDKEIISIKYKQLVEKVNKDKEIAIQAGGLCVIGTERHESRRIDNQLRGRSGRQGDPGLSKFFLSLEDDLLRIFGSDKIKGMLKKLGMKKGEAIQHTWISRAIEKAQHKVELRNYDIRKSLLKFDNVINEQRKVVFDQRNRILDNDSYNISLIYRDINSDIVNNIIHDKYYNLDDETYKLISSEITRIYSITLDYNTISELESKNKLIEHINNITDEFFNKKIAEFTSKEKDLWDNLTKKVMIMSLDYLWREHLAALDSLKCGINLRSIAQKDPLNEFKSEAFSMLESMMSNFYELIIQRLAHLKSDNIFHSYSKELNNLQSSQDINSIKISRNEKCPCGSGKKYKHCHGENI.

Residues Gln86, 104–108 (GEGKT), and Asp499 each bind ATP. 4 residues coordinate Zn(2+): Cys854, Cys856, Cys865, and His866.

It belongs to the SecA family. In terms of assembly, monomer and homodimer. Part of the essential Sec protein translocation apparatus which comprises SecA, SecYEG and auxiliary proteins SecDF-YajC and YidC. Requires Zn(2+) as cofactor.

The protein resides in the cell inner membrane. Its subcellular location is the cytoplasm. It carries out the reaction ATP + H2O + cellular proteinSide 1 = ADP + phosphate + cellular proteinSide 2.. Functionally, part of the Sec protein translocase complex. Interacts with the SecYEG preprotein conducting channel. Has a central role in coupling the hydrolysis of ATP to the transfer of proteins into and across the cell membrane, serving both as a receptor for the preprotein-SecB complex and as an ATP-driven molecular motor driving the stepwise translocation of polypeptide chains across the membrane. In Ehrlichia ruminantium (strain Welgevonden), this protein is Protein translocase subunit SecA.